Here is a 492-residue protein sequence, read N- to C-terminus: Probable Xaa-Pro aminopeptidase AO090005001240 (492 aa).

Asp272, Asp283, Glu420, and Glu459 together coordinate Mn(2+).

It belongs to the peptidase M24B family. Requires Mn(2+) as cofactor.

The catalysed reaction is Release of any N-terminal amino acid, including proline, that is linked to proline, even from a dipeptide or tripeptide.. Catalyzes the removal of a penultimate prolyl residue from the N-termini of peptides. The protein is Probable Xaa-Pro aminopeptidase AO090005001240 of Aspergillus oryzae (strain ATCC 42149 / RIB 40) (Yellow koji mold).